The sequence spans 262 residues: Tryptophan synthase alpha chain (262 aa).

Active-site proton acceptor residues include glutamate 49 and aspartate 60.

This sequence belongs to the TrpA family. In terms of assembly, tetramer of two alpha and two beta chains.

It catalyses the reaction (1S,2R)-1-C-(indol-3-yl)glycerol 3-phosphate + L-serine = D-glyceraldehyde 3-phosphate + L-tryptophan + H2O. Its pathway is amino-acid biosynthesis; L-tryptophan biosynthesis; L-tryptophan from chorismate: step 5/5. Functionally, the alpha subunit is responsible for the aldol cleavage of indoleglycerol phosphate to indole and glyceraldehyde 3-phosphate. The polypeptide is Tryptophan synthase alpha chain (Aquifex aeolicus (strain VF5)).